We begin with the raw amino-acid sequence, 297 residues long: Glycosylphosphatidylinositol anchor biosynthesis protein 11 (297 aa).

Positions 1–18 are enriched in low complexity; the sequence is MTSASPSPLRAANAASSA. Residues 1–26 form a disordered region; the sequence is MTSASPSPLRAANAASSAPVPPPAMK. A run of 2 helical transmembrane segments spans residues 44–64 and 76–96; these read SFVH…ALVA and FLAL…GSVL. The disordered stretch occupies residues 97-140; the sequence is PSPPASPVSDGDEKEKEKEKEKEKEKEKRKLPLRAGKLPRKKNQ. Over residues 107–126 the composition is skewed to basic and acidic residues; the sequence is GDEKEKEKEKEKEKEKEKRK. Residues 127 to 140 are compositionally biased toward basic residues; sequence LPLRAGKLPRKKNQ. An N-linked (GlcNAc...) asparagine glycan is attached at asparagine 139. A run of 4 helical transmembrane segments spans residues 157–177, 187–207, 225–245, and 253–273; these read LILT…LFGA, VLCA…VHGV, VWGG…PIPL, and AFPI…SVVC.

This sequence belongs to the PIGF family.

The protein localises to the endoplasmic reticulum membrane. It participates in glycolipid biosynthesis; glycosylphosphatidylinositol-anchor biosynthesis. Acts in the GPI biosynthetic pathway between GlcNAc-PI synthesis and GPI transfer to protein. This is Glycosylphosphatidylinositol anchor biosynthesis protein 11 (gpi11) from Aspergillus fumigatus (strain ATCC MYA-4609 / CBS 101355 / FGSC A1100 / Af293) (Neosartorya fumigata).